The chain runs to 166 residues: Protein-export protein SecB (166 aa).

Residues Met1–Pro16 are compositionally biased toward polar residues. The segment at Met1–Ser21 is disordered.

It belongs to the SecB family. Homotetramer, a dimer of dimers. One homotetramer interacts with 1 SecA dimer.

It localises to the cytoplasm. Functionally, one of the proteins required for the normal export of preproteins out of the cell cytoplasm. It is a molecular chaperone that binds to a subset of precursor proteins, maintaining them in a translocation-competent state. It also specifically binds to its receptor SecA. The polypeptide is Protein-export protein SecB (Hyphomonas neptunium (strain ATCC 15444)).